The sequence spans 183 residues: Adenine phosphoribosyltransferase (183 aa).

The protein belongs to the purine/pyrimidine phosphoribosyltransferase family. In terms of assembly, homodimer.

It localises to the cytoplasm. The enzyme catalyses AMP + diphosphate = 5-phospho-alpha-D-ribose 1-diphosphate + adenine. It functions in the pathway purine metabolism; AMP biosynthesis via salvage pathway; AMP from adenine: step 1/1. In terms of biological role, catalyzes a salvage reaction resulting in the formation of AMP, that is energically less costly than de novo synthesis. The protein is Adenine phosphoribosyltransferase of Klebsiella pneumoniae (strain 342).